Here is a 444-residue protein sequence, read N- to C-terminus: Methylenetetrahydrofolate--tRNA-(uracil-5-)-methyltransferase TrmFO (444 aa).

9–14 (GAGLAG) is an FAD binding site.

The protein belongs to the MnmG family. TrmFO subfamily. The cofactor is FAD.

It localises to the cytoplasm. The enzyme catalyses uridine(54) in tRNA + (6R)-5,10-methylene-5,6,7,8-tetrahydrofolate + NADH + H(+) = 5-methyluridine(54) in tRNA + (6S)-5,6,7,8-tetrahydrofolate + NAD(+). It catalyses the reaction uridine(54) in tRNA + (6R)-5,10-methylene-5,6,7,8-tetrahydrofolate + NADPH + H(+) = 5-methyluridine(54) in tRNA + (6S)-5,6,7,8-tetrahydrofolate + NADP(+). In terms of biological role, catalyzes the folate-dependent formation of 5-methyl-uridine at position 54 (M-5-U54) in all tRNAs. This Koribacter versatilis (strain Ellin345) protein is Methylenetetrahydrofolate--tRNA-(uracil-5-)-methyltransferase TrmFO.